Here is a 333-residue protein sequence, read N- to C-terminus: Meiotic recombination protein rec24 (333 aa).

The protein belongs to the MEI4L family. Interacts with Rec7, as part of the meiotic recombination initiation complex.

The protein localises to the cytoplasm. The protein resides in the nucleus. In terms of biological role, required for correct meiotic chromosome segregation and recombination. Accessory protein required for Rec12 activity, which is involved in formation of the double-strand breaks (DSBs) that initiate meiotic recombination. The protein is Meiotic recombination protein rec24 (rec24) of Schizosaccharomyces pombe (strain 972 / ATCC 24843) (Fission yeast).